The primary structure comprises 534 residues: EH domain-containing protein 1 (534 aa).

N-acetylmethionine is present on Met1. Residues 55–286 (FDNKPMVLLV…DLFKDIQSLP (232 aa)) form the Dynamin-type G domain. The G1 motif stretch occupies residues 65–72 (GQYSTGKT). Position 65–72 (65–72 (GQYSTGKT)) interacts with ATP. The G2 motif stretch occupies residues 91–92 (EP). Residues 153 to 156 (DTPG) form a G3 motif region. Positions 198–227 (DEFSEVIKALKNHEDKIRVVLNKADQIETQ) form a coiled coil. The tract at residues 219–222 (NKAD) is G4 motif. Position 220 (Lys220) interacts with ATP. Position 243 (Ile243) is a region of interest, G5 motif. Position 258 (Trp258) interacts with ATP. 2 positions are modified to phosphoserine: Ser355 and Ser456. In terms of domain architecture, EH spans 444-532 (DKPTYDEIFY…PHLVPPSKRR (89 aa)). The EF-hand domain maps to 476–511 (LPNTVLGKIWKLADVDKDGLLDDEEFALANHLIKVK). Ca(2+) is bound by residues Asp489, Asp491, Asp493, and Glu500.

Belongs to the TRAFAC class dynamin-like GTPase superfamily. Dynamin/Fzo/YdjA family. EHD subfamily. As to quaternary structure, homooligomer, and heterooligomer with EHD2, EHD3 and EHD4, ATP-binding is required for heterooligomerization. Interacts (via EH domain) with MICALL1 (via NPF1 motif); the interaction is direct and recruits EHD1 to membranes. Interacts with RAB35; the interaction is indirect through MICALL1 and recruits EHD1 to membranes. Interacts (via EH domain) with PACSIN2 (via NPF motifs); regulates localization to tubular recycling endosome membranes. Interacts with PACSIN1. Interacts with RAB8A. Interacts with FER1L5 (via second C2 domain). Interacts with MYOF. Interacts with ZFYVE20. Interacts (via EH domain) with RAB11FIP2.

It is found in the recycling endosome membrane. Its subcellular location is the early endosome membrane. The protein localises to the cell membrane. It localises to the cell projection. The protein resides in the cilium membrane. Functionally, ATP- and membrane-binding protein that controls membrane reorganization/tubulation upon ATP hydrolysis. Acts in early endocytic membrane fusion and membrane trafficking of recycling endosomes. Recruited to endosomal membranes upon nerve growth factor stimulation, indirectly regulates neurite outgrowth. Plays a role in myoblast fusion. Involved in the unidirectional retrograde dendritic transport of endocytosed BACE1 and in efficient sorting of BACE1 to axons implicating a function in neuronal APP processing. Plays a role in the formation of the ciliary vesicle (CV), an early step in cilium biogenesis. Proposed to be required for the fusion of distal appendage vesicles (DAVs) to form the CV by recruiting SNARE complex component SNAP29. Is required for recruitment of transition zone proteins CEP290, RPGRIP1L, TMEM67 and B9D2, and of IFT20 following DAV reorganization before Rab8-dependent ciliary membrane extension. Required for the loss of CCP110 form the mother centriole essential for the maturation of the basal body during ciliogenesis. This chain is EH domain-containing protein 1, found in Pongo abelii (Sumatran orangutan).